The chain runs to 203 residues: Ribosome hibernation promotion factor (203 aa).

Belongs to the HPF/YfiA ribosome-associated protein family. Long HPF subfamily. In terms of assembly, interacts with 100S ribosomes.

It localises to the cytoplasm. In terms of biological role, required for dimerization of active 70S ribosomes into 100S ribosomes in stationary phase; 100S ribosomes are translationally inactive and sometimes present during exponential growth. This Bradyrhizobium diazoefficiens (strain JCM 10833 / BCRC 13528 / IAM 13628 / NBRC 14792 / USDA 110) protein is Ribosome hibernation promotion factor.